The sequence spans 56 residues: RGICLEPKVVGPCKARIRRFYYDSETGKCTPFIYGGCGGNGNNFETLHACRGICRA.

The region spanning 4–54 (CLEPKVVGPCKARIRRFYYDSETGKCTPFIYGGCGGNGNNFETLHACRGIC) is the BPTI/Kunitz inhibitor domain. Cystine bridges form between C4–C54, C13–C37, and C29–C50.

This sequence belongs to the venom Kunitz-type family. Sea anemone type 2 potassium channel toxin subfamily. Post-translationally, contains three disulfide bonds.

The protein resides in the secreted. Its subcellular location is the nematocyst. In terms of biological role, serine protease inhibitor that inhibits trypsin (Ki=50 nM) and probably also chymotrypsin (Kd=1.6 nM). Has an anti-inflammatory effect in LPS-activated macrophages in vitro, specifically reducing release of TNF and IL6 but not nitric oxide and reducing expression of IL1B precursor. The sequence is that of PI-stichotoxin-Hmg3a from Heteractis magnifica (Magnificent sea anemone).